A 506-amino-acid chain; its full sequence is Arylsulfatase A (506 aa).

The first 17 residues, 1–17, serve as a signal peptide directing secretion; it reads MALGTLFLALAAGLSTA. Ca(2+) contacts are provided by aspartate 28, aspartate 29, and cysteine 68. Cysteine 68 (nucleophile) is an active-site residue. Cysteine 68 carries the 3-oxoalanine (Cys) modification. Residue lysine 122 participates in substrate binding. Residue histidine 124 is part of the active site. Serine 149 contacts substrate. Cystine bridges form between cysteine 155-cysteine 171 and cysteine 160-cysteine 167. Asparagine 157 carries an N-linked (GlcNAc...) asparagine glycan. Residue asparagine 183 is glycosylated (N-linked (GlcNAc...) asparagine). Histidine 228 is a binding site for substrate. Ca(2+)-binding residues include aspartate 280 and asparagine 281. 4 disulfide bridges follow: cysteine 299–cysteine 413, cysteine 487–cysteine 499, cysteine 488–cysteine 501, and cysteine 492–cysteine 498. Lysine 301 is a substrate binding site. N-linked (GlcNAc...) asparagine glycosylation occurs at asparagine 349.

It belongs to the sulfatase family. In terms of assembly, homodimer at neutral pH and homooctamer at acidic pH. Exists both as a single chain of 58 kDa (component A) or as a chain of 50 kDa (component B) linked by disulfide bond(s) to a 7 kDa chain (component C). Interacts with SUMF1. It depends on Ca(2+) as a cofactor. In terms of processing, the conversion to 3-oxoalanine (also known as C-formylglycine, FGly), of a serine or cysteine residue in prokaryotes and of a cysteine residue in eukaryotes, is critical for catalytic activity. This post-translational modification is severely defective in multiple sulfatase deficiency (MSD).

Its subcellular location is the endoplasmic reticulum. The protein localises to the lysosome. It catalyses the reaction an N-acyl-1-beta-D-(3-O-sulfo)-galactosyl-sphing-4-enine + H2O = a beta-D-galactosyl-(1&lt;-&gt;1')-N-acylsphing-4-enine + sulfate + H(+). In terms of biological role, hydrolyzes cerebroside sulfate. This is Arylsulfatase A (Arsa) from Mus musculus (Mouse).